The chain runs to 430 residues: Serine--tRNA ligase (430 aa).

237 to 239 (TAE) serves as a coordination point for L-serine. 268–270 (RSE) provides a ligand contact to ATP. An L-serine-binding site is contributed by glutamate 291. Residue 355 to 358 (EISS) participates in ATP binding. Serine 391 contributes to the L-serine binding site.

It belongs to the class-II aminoacyl-tRNA synthetase family. Type-1 seryl-tRNA synthetase subfamily. Homodimer. The tRNA molecule binds across the dimer.

It is found in the cytoplasm. The enzyme catalyses tRNA(Ser) + L-serine + ATP = L-seryl-tRNA(Ser) + AMP + diphosphate + H(+). It catalyses the reaction tRNA(Sec) + L-serine + ATP = L-seryl-tRNA(Sec) + AMP + diphosphate + H(+). It functions in the pathway aminoacyl-tRNA biosynthesis; selenocysteinyl-tRNA(Sec) biosynthesis; L-seryl-tRNA(Sec) from L-serine and tRNA(Sec): step 1/1. In terms of biological role, catalyzes the attachment of serine to tRNA(Ser). Is also able to aminoacylate tRNA(Sec) with serine, to form the misacylated tRNA L-seryl-tRNA(Sec), which will be further converted into selenocysteinyl-tRNA(Sec). The protein is Serine--tRNA ligase of Klebsiella pneumoniae subsp. pneumoniae (strain ATCC 700721 / MGH 78578).